The chain runs to 242 residues: Glutamate transport ATP-binding protein GluA (242 aa).

In terms of domain architecture, ABC transporter spans 2–236 (IKMTGVQKFF…PQTDRAKDFL (235 aa)). 34-41 (GPSGSGKS) provides a ligand contact to ATP.

It belongs to the ABC transporter superfamily. As to quaternary structure, the complex is composed of two ATP-binding proteins (GluA), two transmembrane proteins (GluC and GluD) and a solute-binding protein (GluB).

The protein localises to the cell membrane. It carries out the reaction a polar amino acid(out) + ATP + H2O = a polar amino acid(in) + ADP + phosphate + H(+). It catalyses the reaction L-glutamate(out) + ATP + H2O = L-glutamate(in) + ADP + phosphate + H(+). In terms of biological role, part of the ABC transporter complex GluABCD involved in glutamate uptake. Probably responsible for energy coupling to the transport system. This Corynebacterium efficiens (strain DSM 44549 / YS-314 / AJ 12310 / JCM 11189 / NBRC 100395) protein is Glutamate transport ATP-binding protein GluA.